The sequence spans 350 residues: Phenylalanine--tRNA ligase alpha subunit (350 aa).

Residue Glu271 participates in Mg(2+) binding.

This sequence belongs to the class-II aminoacyl-tRNA synthetase family. Phe-tRNA synthetase alpha subunit type 1 subfamily. In terms of assembly, tetramer of two alpha and two beta subunits. The cofactor is Mg(2+).

The protein resides in the cytoplasm. The enzyme catalyses tRNA(Phe) + L-phenylalanine + ATP = L-phenylalanyl-tRNA(Phe) + AMP + diphosphate + H(+). In Acidovorax ebreus (strain TPSY) (Diaphorobacter sp. (strain TPSY)), this protein is Phenylalanine--tRNA ligase alpha subunit.